A 320-amino-acid chain; its full sequence is Lactamase-like protein GME11357 (320 aa).

Positions 106, 108, 110, and 111 each coordinate Zn(2+). D110 serves as the catalytic Proton donor/acceptor.

It belongs to the metallo-beta-lactamase superfamily. The cofactor is Zn(2+).

Its pathway is secondary metabolite biosynthesis. Lactamase-like protein; part of the gene cluster that mediates the biosynthesis of dibenzodioxocinones such as pestalotiollide B, a novel class of inhibitors against cholesterol ester transfer protein (CEPT). The biosynthesis initiates from condensation of acetate and malonate units catalyzed by the non-reducing PKS pks8/GME11356. Pks8/GME11356 lacks a thioesterase (TE) domain, which is important to the cyclizing of the third ring of atrochrysone carboxylic acid, and the esterase GME11355 might play the role of TE and catalyzes the cyclization reaction of the C ring. The lactamase-like protein GME11357 (or other beta-lactamases in Pestalotiopsis microspora) probably hydrolyzes the thioester bond between the ACP of pks8/GME11356 and the intermediate to release atrochrysone carboxylic acid, which is spontaneously dehydrates to form endocrocin anthrone. Endocrocin anthrone is further converted to emodin via the endocrocin intermediate. Emodin is then oxidized by several enzymes such as the Baeyer-Villiger oxidase GME11358, the oxidoreductase GME11367, the short chain dehydrogenase/reductase GME11373, as well as by other oxidoreductases from the cluster, to modify the A and C rings and open the B ring, and finally yield monodictyphenone. The prenyltransferase GME11375 may catalyze the addition reaction between the C5 side chains and the carbon bone of dibenzodioxocinones. The remaining biochemical reactions to the final product dibenzodioxocinones should be methylation catalyzed by methyltransferase GME11366 and reduction and lactonization reaction catalyzed by a series of oxidordeuctases. The protein is Lactamase-like protein GME11357 of Pestalotiopsis microspora.